The following is a 626-amino-acid chain: Nuclear RNA export factor 2 (626 aa).

Ser-34 carries the phosphoserine modification. Positions 124-203 constitute an RRM domain; it reads WFKVTIPYGI…IFVNHSTAPY (80 aa). LRR repeat units lie at residues 271–296, 297–320, 321–348, and 349–376; these read ELLSLNLCNNKLYQLDGLSDITEKAP, KVKTLNLSKNKLESAWELGKVKGL, KLEELWLEGNPLCSTFSDQSAYVSAIRD, and CFPKLLRLDGRELSAPVIVDIDSSETMK. Positions 391–541 constitute an NTF2 domain; the sequence is LVLQFLQQYY…LCIVNDELFV (151 aa). Residues 570–625 form the TAP-C domain; it reads QEQQEMVQAFSAQSGMKLEWSQKCLQDNEWNYTRAGQAFTMLQTEGKIPAEAFKQI.

This sequence belongs to the NXF family. Interacts with NXT1, NXT2, E1B-AP5, the REF proteins and with nucleoporins, Nup62, Nup153 and Nup214. Interacts with LUZP4. As to expression, expressed almost exclusively in testis. Also expressed in several cancers.

The protein localises to the nucleus. The protein resides in the nucleoplasm. It is found in the cytoplasm. Involved in the export of mRNA from the nucleus to the cytoplasm. This chain is Nuclear RNA export factor 2 (NXF2), found in Homo sapiens (Human).